The primary structure comprises 129 residues: UPF0212 protein MM_2357 (129 aa).

It belongs to the UPF0212 family.

The protein is UPF0212 protein MM_2357 of Methanosarcina mazei (strain ATCC BAA-159 / DSM 3647 / Goe1 / Go1 / JCM 11833 / OCM 88) (Methanosarcina frisia).